The chain runs to 475 residues: Putative F-box protein At1g46840 (475 aa).

The F-box domain maps to 25-71 (TYVLEKLHIDLVIEILSRLSAKSIAICRCVSKQWNSLLVSQDFVESF). Positions 423 to 433 (SSYSTTRSYKS) are enriched in low complexity. The disordered stretch occupies residues 423-475 (SSYSTTRSYKSSGKRCSDRSIGEDEQDDIGEKRGDQAAERRERSTKRGKHEVH). The span at 451 to 464 (IGEKRGDQAAERRE) shows a compositional bias: basic and acidic residues. The segment covering 465-475 (RSTKRGKHEVH) has biased composition (basic residues).

The chain is Putative F-box protein At1g46840 from Arabidopsis thaliana (Mouse-ear cress).